We begin with the raw amino-acid sequence, 511 residues long: Ribonuclease Y (511 aa).

The helical transmembrane segment at 3–23 (VGILIGIIILGVVGFIQYTLI) threads the bilayer. The 86-residue stretch at 201–286 (TVHVVALPND…EMVERAIKDV (86 aa)) folds into the KH domain. The 94-residue stretch at 327-420 (VLKHSIEVSY…VQAADAISAA (94 aa)) folds into the HD domain.

Belongs to the RNase Y family.

It localises to the cell membrane. In terms of biological role, endoribonuclease that initiates mRNA decay. The protein is Ribonuclease Y of Clostridium perfringens (strain ATCC 13124 / DSM 756 / JCM 1290 / NCIMB 6125 / NCTC 8237 / Type A).